A 91-amino-acid polypeptide reads, in one-letter code: Acylphosphatase (91 aa).

The 89-residue stretch at 3–91 (TVTMKVTGLV…EKFTRFSVVY (89 aa)) folds into the Acylphosphatase-like domain. Catalysis depends on residues Arg-18 and Asn-36.

It belongs to the acylphosphatase family.

It catalyses the reaction an acyl phosphate + H2O = a carboxylate + phosphate + H(+). The chain is Acylphosphatase (acyP) from Lactobacillus gasseri (strain ATCC 33323 / DSM 20243 / BCRC 14619 / CIP 102991 / JCM 1131 / KCTC 3163 / NCIMB 11718 / NCTC 13722 / AM63).